A 495-amino-acid chain; its full sequence is MEYLLSIDQGTTSSRATLYAASGESLATASRPLAQHYPNPGWVEHDPQEIWEGQLACITEAVAKAGIAPSQIAGVGITNQRETTVVWERETGLPLHRAIVWQDRRTAELTESLKEQGLEAMVRERTGLLLDPYFSASKLCWLLDRVDGLRQRAERGEVCFGTVDSWLMFKLSGGKSHLTDISNASRTMLFNINTLEWDEELLRLFRIPRGMLPEVRGSAAGFGHTSGEVAGAEIHIAGVAGDQQAALFGQGCFAPGMAKATFGTGAFVVMNSGARPGVGDGALSTIAWQLPGEAVQYALEGSIFIAGAAVQWLQEGLGLIGNAREVEVLAASVPDSGGVYFVPALSGLGTPYWDPYARGVVAGLTRGSTKAHLARAALEAIAFQTLDAIRAMEQASGIALKELRVDGGAAANNLLLQIQADLLGVPVLRPRCTESTSLGAAFLAGIGAGVLDTSAIAAQWALDRRFEPQMERERREELHRGWQKCVRLSLGWEKN.

T11 serves as a coordination point for ADP. 3 residues coordinate ATP: T11, T12, and S13. Position 11 (T11) interacts with sn-glycerol 3-phosphate. Residue R15 coordinates ADP. Positions 81, 82, 133, and 242 each coordinate sn-glycerol 3-phosphate. R81, E82, Y133, D242, and Q243 together coordinate glycerol. ADP is bound by residues T264 and G307. Residues T264, G307, Q311, and G408 each contribute to the ATP site. ADP-binding residues include G408 and N412.

It belongs to the FGGY kinase family.

The catalysed reaction is glycerol + ATP = sn-glycerol 3-phosphate + ADP + H(+). Its pathway is polyol metabolism; glycerol degradation via glycerol kinase pathway; sn-glycerol 3-phosphate from glycerol: step 1/1. With respect to regulation, inhibited by fructose 1,6-bisphosphate (FBP). Key enzyme in the regulation of glycerol uptake and metabolism. Catalyzes the phosphorylation of glycerol to yield sn-glycerol 3-phosphate. This Citrifermentans bemidjiense (strain ATCC BAA-1014 / DSM 16622 / JCM 12645 / Bem) (Geobacter bemidjiensis) protein is Glycerol kinase.